Consider the following 135-residue polypeptide: ATP synthase epsilon chain, chloroplastic (135 aa).

The protein belongs to the ATPase epsilon chain family. F-type ATPases have 2 components, CF(1) - the catalytic core - and CF(0) - the membrane proton channel. CF(1) has five subunits: alpha(3), beta(3), gamma(1), delta(1), epsilon(1). CF(0) has three main subunits: a, b and c.

It localises to the plastid. The protein localises to the chloroplast thylakoid membrane. Produces ATP from ADP in the presence of a proton gradient across the membrane. The protein is ATP synthase epsilon chain, chloroplastic of Euglena gracilis.